Consider the following 380-residue polypeptide: Queuine tRNA-ribosyltransferase (380 aa).

Asp-96 functions as the Proton acceptor in the catalytic mechanism. Residues 96–100 (DSGGF), Asp-150, Gln-193, and Gly-220 contribute to the substrate site. The tract at residues 251 to 257 (GVGAPDS) is RNA binding. Asp-270 (nucleophile) is an active-site residue. The tract at residues 275-279 (TRIAR) is RNA binding; important for wobble base 34 recognition. Zn(2+) is bound by residues Cys-308, Cys-310, Cys-313, and His-339.

This sequence belongs to the queuine tRNA-ribosyltransferase family. In terms of assembly, homodimer. Within each dimer, one monomer is responsible for RNA recognition and catalysis, while the other monomer binds to the replacement base PreQ1. Requires Zn(2+) as cofactor.

The catalysed reaction is 7-aminomethyl-7-carbaguanine + guanosine(34) in tRNA = 7-aminomethyl-7-carbaguanosine(34) in tRNA + guanine. The protein operates within tRNA modification; tRNA-queuosine biosynthesis. Catalyzes the base-exchange of a guanine (G) residue with the queuine precursor 7-aminomethyl-7-deazaguanine (PreQ1) at position 34 (anticodon wobble position) in tRNAs with GU(N) anticodons (tRNA-Asp, -Asn, -His and -Tyr). Catalysis occurs through a double-displacement mechanism. The nucleophile active site attacks the C1' of nucleotide 34 to detach the guanine base from the RNA, forming a covalent enzyme-RNA intermediate. The proton acceptor active site deprotonates the incoming PreQ1, allowing a nucleophilic attack on the C1' of the ribose to form the product. After dissociation, two additional enzymatic reactions on the tRNA convert PreQ1 to queuine (Q), resulting in the hypermodified nucleoside queuosine (7-(((4,5-cis-dihydroxy-2-cyclopenten-1-yl)amino)methyl)-7-deazaguanosine). The chain is Queuine tRNA-ribosyltransferase from Streptococcus pneumoniae (strain P1031).